The primary structure comprises 833 residues: MGQKKKKLAKGRLDKFYYMAKEQGYRSRAAFKLIQLNKKYNFLGTAKACLDLCAAPGGWMQVASKYMPVQSLIVGVDLVPIRQVRNCIGLTEDITTQKCRTEIKKALKTWKVDVCLHDGAPNMGTSWVQDAYQQAELTLHALKLATEFLTTGGWFVTKVFRGSDYNSLIWVFNKLFKKVESTKPPSSRNASAEIFVVCQGFLNPKRIDPKLLDPKFVFKEIQEVKKVDVLSEKKKVNRAGYEDGVTVLYKKGFISDFVNSNEHLQDLANFNAFEFDEAAKIFEQHELTTPEIKELVKDLKVLNKNDFQKIIKWKKAMAAYKEKLDNPDEEETEKPEEKKELTAEEMEENLQEEMKEYLALVEKKKRKEKKRQNELKRKHQRKIELTMHIPGDKIEETTDGDLYSMKGKDEFDEDIVADHSDISSDEFDSDDSDDDDDDDNNGDSKLIDDDEYLEQQLDEQYKLYQQRIRKKAAKLDDVKVKKDKIGQDGYNEDDEEFVEEQEESNPLLVGNKRKEPDAQAVSSLFFDNELFGGVEYRNPGDSESEPEQDGDDDQDDENNKPIDISKLKKQKPQAAQPITKKQKTTNSAEFGKQKSKYQKNPTLDDKDDQDDDDDKGNSIKGFEEVPVQEEVEYESDSDEDIDDKIKTKALGEFLIRKKSRQDLIDDSFNKYAFNDTGLPNWFTDDENRHNKAQTPLTKEMVDEIRRKIKEIDDRPIKKIAEAKARKKYRLGKKMEKTRDKASSIVDNPEMSNREKSKAIEKLYSGTDKKNMKPKKIIMIAKKSKTAGGGTGKYKIVDKRMKKDLRAQKNKLKTVGRSKDSSKKSKPSGGKNKK.

G57, W59, D77, D93, and D118 together coordinate S-adenosyl-L-methionine. K158 functions as the Proton acceptor in the catalytic mechanism. Disordered regions lie at residues 323 to 349, 363 to 453, 475 to 640, 730 to 767, and 779 to 833; these read KLDN…MEEN, KKKR…DEYL, LDDV…SDED, LGKK…SGTD, and IAKK…KNKK. Positions 336-386 form a coiled coil; it reads EEKKELTAEEMEENLQEEMKEYLALVEKKKRKEKKRQNELKRKHQRKIELT. Residues 363–381 show a composition bias toward basic residues; sequence KKKRKEKKRQNELKRKHQR. A compositionally biased stretch (basic and acidic residues) spans 382 to 396; the sequence is KIELTMHIPGDKIEE. Positions 423–441 are enriched in acidic residues; sequence SSDEFDSDDSDDDDDDDNN. Residues 455 to 485 adopt a coiled-coil conformation; sequence QQLDEQYKLYQQRIRKKAAKLDDVKVKKDKI. Over residues 475–486 the composition is skewed to basic and acidic residues; the sequence is LDDVKVKKDKIG. Composition is skewed to acidic residues over residues 490–503 and 542–556; these read YNED…EQEE and SESE…DQDD. Residues 557 to 566 show a composition bias toward basic and acidic residues; that stretch reads ENNKPIDISK. Composition is skewed to acidic residues over residues 605–614 and 626–640; these read DKDDQDDDDD and PVQE…SDED. Basic and acidic residues-rich tracts occupy residues 732-741, 751-767, and 794-806; these read KKMEKTRDKA, SNRE…SGTD, and KIVD…DLRA.

This sequence belongs to the class I-like SAM-binding methyltransferase superfamily. RNA methyltransferase RlmE family. SPB1 subfamily.

It localises to the nucleus. The protein resides in the nucleolus. It carries out the reaction a ribonucleotide in rRNA + S-adenosyl-L-methionine = a 2'-O-methylribonucleotide in rRNA + S-adenosyl-L-homocysteine + H(+). In terms of biological role, RNA 2'-O-methyltransferase involved in the maturation of rRNA and in the biogenesis of ribosomal subunits. The protein is pre-rRNA 2'-O-ribose RNA methyltransferase (fsjC) of Dictyostelium discoideum (Social amoeba).